Consider the following 395-residue polypeptide: Proteinase-activated receptor 4 (395 aa).

The N-terminal stretch at 1–16 is a signal peptide; the sequence is MCWPLLYPLMLGFSIS. Positions 17 to 58 are cleaved as a propeptide — removed for receptor activation; that stretch reads PAECQTPSIYDDVESTREGQEASLRPTVELNESKSPDKPNPR. Residues 46–66 are disordered; it reads LNESKSPDKPNPRGFPGKPCA. The span at 47–56 shows a compositional bias: basic and acidic residues; sequence NESKSPDKPN. The Extracellular portion of the chain corresponds to 59–93; it reads GFPGKPCANNSDTLELPASSEALLLGWVPTRLVPA. Asn-67 carries an N-linked (GlcNAc...) asparagine glycan. Residues 94–114 traverse the membrane as a helical segment; the sequence is IYGLVVVVGLPANGLALWVLA. At 115–119 the chain is on the cytoplasmic side; it reads TRVPR. The helical transmembrane segment at 120–140 threads the bilayer; it reads LPSTILLMNLAVADLLLALVL. Over 141–161 the chain is Extracellular; it reads PPRLVYHLRGQRWPFGEAACR. Cys-160 and Cys-239 are joined by a disulfide. The chain crosses the membrane as a helical span at residues 162 to 182; it reads VATAALYGHMYGSVLLLAAVS. Over 183–203 the chain is Cytoplasmic; the sequence is LDRYLALVHSLRARALRGQRL. The chain crosses the membrane as a helical span at residues 204–224; that stretch reads TTILCLVAWLSAATLVLPLTF. The Extracellular portion of the chain corresponds to 225-254; the sequence is HRQTFLLAGSDRMLCHDALPLAEQTSHWRP. Residues 255-275 form a helical membrane-spanning segment; the sequence is AFICLAVLGCFVPLLAMVLCY. At 276 to 295 the chain is on the cytoplasmic side; that stretch reads GATLRALAANGQRYSHAVRL. A helical transmembrane segment spans residues 296–316; that stretch reads TALVLFSAVAAFTPSNVLLVL. Over 317 to 330 the chain is Extracellular; that stretch reads HYSNPSPEAWGNLY. The helical transmembrane segment at 331–354 threads the bilayer; the sequence is GAYVPSLALSTLNSCVDPFIYYYV. Residues 355–395 lie on the Cytoplasmic side of the membrane; the sequence is SHEFREKVRAMLCRQLKASSSSQASREAGSRGTAICSSTLL.

The protein belongs to the G-protein coupled receptor 1 family. A proteolytic cleavage generates a new N-terminus that functions as a tethered ligand.

The protein localises to the cell membrane. In terms of biological role, receptor for activated thrombin or trypsin coupled to G proteins that stimulate phosphoinositide hydrolysis. May play a role in platelets activation. The protein is Proteinase-activated receptor 4 (F2rl3) of Rattus norvegicus (Rat).